The primary structure comprises 284 residues: Efem/EfeO family lipoprotein (284 aa).

An N-terminal signal peptide occupies residues 1–17 (MKKLTTLLLASTLLIAA). Residue cysteine 18 is the site of N-palmitoyl cysteine attachment. Cysteine 18 carries S-diacylglycerol cysteine lipidation.

Belongs to the EfeM/EfeO family.

Its subcellular location is the cell membrane. The protein is Efem/EfeO family lipoprotein of Staphylococcus aureus (strain NCTC 8325 / PS 47).